A 275-amino-acid polypeptide reads, in one-letter code: Elongation factor Ts (275 aa).

Residues 76–79 are involved in Mg(2+) ion dislocation from EF-Tu; that stretch reads TDFV.

This sequence belongs to the EF-Ts family.

It is found in the cytoplasm. In terms of biological role, associates with the EF-Tu.GDP complex and induces the exchange of GDP to GTP. It remains bound to the aminoacyl-tRNA.EF-Tu.GTP complex up to the GTP hydrolysis stage on the ribosome. This chain is Elongation factor Ts, found in Rhodococcus erythropolis (strain PR4 / NBRC 100887).